The sequence spans 440 residues: Chromosome partition protein MukF (440 aa).

The segment at 208–236 (LSETSGTLRELQDTLEAAGDKLQANLLRI) is leucine-zipper.

Belongs to the MukF family. As to quaternary structure, interacts, and probably forms a ternary complex, with MukE and MukB via its C-terminal region. The complex formation is stimulated by calcium or magnesium. It is required for an interaction between MukE and MukB.

The protein resides in the cytoplasm. The protein localises to the nucleoid. Functionally, involved in chromosome condensation, segregation and cell cycle progression. May participate in facilitating chromosome segregation by condensation DNA from both sides of a centrally located replisome during cell division. Not required for mini-F plasmid partitioning. Probably acts via its interaction with MukB and MukE. Overexpression results in anucleate cells. It has a calcium binding activity. In Escherichia coli (strain ATCC 8739 / DSM 1576 / NBRC 3972 / NCIMB 8545 / WDCM 00012 / Crooks), this protein is Chromosome partition protein MukF.